The chain runs to 199 residues: Putative AgrB-like protein (199 aa).

5 helical membrane passes run 43–63, 81–101, 108–128, 139–159, and 165–185; these read IIIF…FSFI, YGCL…TRLF, FYIV…PCPN, LKIL…LSPL, and ILIS…KGVI.

The protein belongs to the AgrB family.

It is found in the cell membrane. Functionally, may be involved in the proteolytic processing of a quorum sensing system signal molecule precursor. This Clostridium beijerinckii (Clostridium MP) protein is Putative AgrB-like protein (cfg02).